We begin with the raw amino-acid sequence, 103 residues long: Large ribosomal subunit protein bL21 (103 aa).

Belongs to the bacterial ribosomal protein bL21 family. Part of the 50S ribosomal subunit. Contacts protein L20.

Functionally, this protein binds to 23S rRNA in the presence of protein L20. In Pasteurella multocida (strain Pm70), this protein is Large ribosomal subunit protein bL21.